Reading from the N-terminus, the 235-residue chain is Glycerol-3-phosphate acyltransferase (235 aa).

A run of 6 helical transmembrane segments spans residues 4–24 (LLAI…IMAG), 56–76 (TVTL…VAFF), 94–114 (LLAG…GFKG), 124–144 (MLIG…LLTI), 152–172 (VASM…KYIF), and 191–211 (FHDS…LGIL).

It belongs to the PlsY family. As to quaternary structure, probably interacts with PlsX.

The protein resides in the cell inner membrane. The catalysed reaction is an acyl phosphate + sn-glycerol 3-phosphate = a 1-acyl-sn-glycero-3-phosphate + phosphate. It participates in lipid metabolism; phospholipid metabolism. In terms of biological role, catalyzes the transfer of an acyl group from acyl-phosphate (acyl-PO(4)) to glycerol-3-phosphate (G3P) to form lysophosphatidic acid (LPA). This enzyme utilizes acyl-phosphate as fatty acyl donor, but not acyl-CoA or acyl-ACP. The sequence is that of Glycerol-3-phosphate acyltransferase from Chlorobium limicola (strain DSM 245 / NBRC 103803 / 6330).